Consider the following 495-residue polypeptide: Glycerol kinase (495 aa).

Thr11 provides a ligand contact to ADP. 3 residues coordinate ATP: Thr11, Thr12, and Ser13. Thr11 is a binding site for sn-glycerol 3-phosphate. ADP is bound at residue Arg15. Arg81, Glu82, Tyr133, and Asp242 together coordinate sn-glycerol 3-phosphate. Glycerol contacts are provided by Arg81, Glu82, Tyr133, Asp242, and Gln243. Residues Thr264 and Gly307 each coordinate ADP. ATP-binding residues include Thr264, Gly307, Gln311, and Gly410. Gly410 provides a ligand contact to ADP.

It belongs to the FGGY kinase family.

The catalysed reaction is glycerol + ATP = sn-glycerol 3-phosphate + ADP + H(+). It functions in the pathway polyol metabolism; glycerol degradation via glycerol kinase pathway; sn-glycerol 3-phosphate from glycerol: step 1/1. With respect to regulation, inhibited by fructose 1,6-bisphosphate (FBP). Key enzyme in the regulation of glycerol uptake and metabolism. Catalyzes the phosphorylation of glycerol to yield sn-glycerol 3-phosphate. This Roseobacter denitrificans (strain ATCC 33942 / OCh 114) (Erythrobacter sp. (strain OCh 114)) protein is Glycerol kinase.